The chain runs to 623 residues: uncharacterized protein (623 aa).

Transmembrane regions (helical) follow at residues 242 to 262 (IALALMILALLLGLRKLITWL), 288 to 308 (IVSPVSVFLALFSCDVALDIF), 318 to 338 (VSMWVGAVYIMLLAWLVIALF), 361 to 381 (VINLILKVVYFLIFIVALLGV), and 387 to 407 (FNVSAIIASLGIGGLAVALAV).

The protein belongs to the MscS (TC 1.A.23) family.

The protein resides in the cell membrane. This is an uncharacterized protein from Helicobacter pylori (strain J99 / ATCC 700824) (Campylobacter pylori J99).